A 390-amino-acid polypeptide reads, in one-letter code: Dual-specificity RNA methyltransferase RlmN (390 aa).

Residue Glu-110 is the Proton acceptor of the active site. The region spanning 116 to 355 is the Radical SAM core domain; sequence EADRATLCVS…VIIRKTRGDD (240 aa). Cys-123 and Cys-360 form a disulfide bridge. Residues Cys-130, Cys-134, and Cys-137 each contribute to the [4Fe-4S] cluster site. S-adenosyl-L-methionine is bound by residues 184-185, Ser-216, 238-240, and Asn-317; these read GE and SLH. Catalysis depends on Cys-360, which acts as the S-methylcysteine intermediate.

This sequence belongs to the radical SAM superfamily. RlmN family. It depends on [4Fe-4S] cluster as a cofactor.

Its subcellular location is the cytoplasm. The catalysed reaction is adenosine(2503) in 23S rRNA + 2 reduced [2Fe-2S]-[ferredoxin] + 2 S-adenosyl-L-methionine = 2-methyladenosine(2503) in 23S rRNA + 5'-deoxyadenosine + L-methionine + 2 oxidized [2Fe-2S]-[ferredoxin] + S-adenosyl-L-homocysteine. It catalyses the reaction adenosine(37) in tRNA + 2 reduced [2Fe-2S]-[ferredoxin] + 2 S-adenosyl-L-methionine = 2-methyladenosine(37) in tRNA + 5'-deoxyadenosine + L-methionine + 2 oxidized [2Fe-2S]-[ferredoxin] + S-adenosyl-L-homocysteine. Functionally, specifically methylates position 2 of adenine 2503 in 23S rRNA and position 2 of adenine 37 in tRNAs. m2A2503 modification seems to play a crucial role in the proofreading step occurring at the peptidyl transferase center and thus would serve to optimize ribosomal fidelity. The protein is Dual-specificity RNA methyltransferase RlmN of Haemophilus influenzae (strain ATCC 51907 / DSM 11121 / KW20 / Rd).